Here is a 111-residue protein sequence, read N- to C-terminus: UPF0375 protein ule-4 (111 aa).

The N-terminal stretch at 1–18 (MNSRLVLLLAVSVALVSA) is a signal peptide. 2 N-linked (GlcNAc...) asparagine glycosylation sites follow: Asn-23 and Asn-58.

Belongs to the UPF0375 family.

Its subcellular location is the secreted. The polypeptide is UPF0375 protein ule-4 (Caenorhabditis elegans).